Reading from the N-terminus, the 61-residue chain is MDTKLLDILACPVCKGPLKLSADKTELISKGAGLAYPVRDGIPVMLESEARTLSTDERLEK.

This sequence belongs to the UPF0434 family.

This Pseudomonas savastanoi pv. phaseolicola (strain 1448A / Race 6) (Pseudomonas syringae pv. phaseolicola (strain 1448A / Race 6)) protein is UPF0434 protein PSPPH_1629.